Here is a 251-residue protein sequence, read N- to C-terminus: 4-hydroxy-tetrahydrodipicolinate reductase (251 aa).

Residues 8 to 13, 76 to 78, and 106 to 109 contribute to the NAD(+) site; these read GAKGRM, GTT, and APNF. The active-site Proton donor/acceptor is the H136. A (S)-2,3,4,5-tetrahydrodipicolinate-binding site is contributed by H137. K140 serves as the catalytic Proton donor. Residue 146 to 147 coordinates (S)-2,3,4,5-tetrahydrodipicolinate; sequence GT.

Belongs to the DapB family.

The protein localises to the cytoplasm. It carries out the reaction (S)-2,3,4,5-tetrahydrodipicolinate + NAD(+) + H2O = (2S,4S)-4-hydroxy-2,3,4,5-tetrahydrodipicolinate + NADH + H(+). The enzyme catalyses (S)-2,3,4,5-tetrahydrodipicolinate + NADP(+) + H2O = (2S,4S)-4-hydroxy-2,3,4,5-tetrahydrodipicolinate + NADPH + H(+). Its pathway is amino-acid biosynthesis; L-lysine biosynthesis via DAP pathway; (S)-tetrahydrodipicolinate from L-aspartate: step 4/4. Its function is as follows. Catalyzes the conversion of 4-hydroxy-tetrahydrodipicolinate (HTPA) to tetrahydrodipicolinate. This Bifidobacterium longum (strain NCC 2705) protein is 4-hydroxy-tetrahydrodipicolinate reductase.